We begin with the raw amino-acid sequence, 103 residues long: UPF0145 protein Amet_0532 (103 aa).

It belongs to the UPF0145 family.

In Alkaliphilus metalliredigens (strain QYMF), this protein is UPF0145 protein Amet_0532.